The chain runs to 293 residues: 4-hydroxy-tetrahydrodipicolinate synthase (293 aa).

Pyruvate is bound at residue Thr-45. Residue Tyr-133 is the Proton donor/acceptor of the active site. Catalysis depends on Lys-162, which acts as the Schiff-base intermediate with substrate. Ile-204 lines the pyruvate pocket.

Belongs to the DapA family. As to quaternary structure, homotetramer; dimer of dimers.

It is found in the cytoplasm. It catalyses the reaction L-aspartate 4-semialdehyde + pyruvate = (2S,4S)-4-hydroxy-2,3,4,5-tetrahydrodipicolinate + H2O + H(+). It functions in the pathway amino-acid biosynthesis; L-lysine biosynthesis via DAP pathway; (S)-tetrahydrodipicolinate from L-aspartate: step 3/4. Functionally, catalyzes the condensation of (S)-aspartate-beta-semialdehyde [(S)-ASA] and pyruvate to 4-hydroxy-tetrahydrodipicolinate (HTPA). The polypeptide is 4-hydroxy-tetrahydrodipicolinate synthase (Brucella suis biovar 1 (strain 1330)).